The sequence spans 26 residues: DEAD-box ATP-dependent RNA helicase 1 (26 aa).

Positions 1–10 match the Q motif motif; it reads RELLMGIFEK. ATP is bound at residue 11–16; the sequence is NGTGKT. The 16-residue stretch at 11-26 folds into the Helicase ATP-binding domain; sequence NGTGKTAAFVIPLLQK.

It belongs to the DEAD box helicase family. DDX6/DHH1 subfamily.

The protein resides in the cytoplasm. Its subcellular location is the P-body. It catalyses the reaction ATP + H2O = ADP + phosphate + H(+). Functionally, ATP-dependent RNA helicase involved in mRNA turnover, and more specifically in mRNA decapping. The protein is DEAD-box ATP-dependent RNA helicase 1 of Catharanthus roseus (Madagascar periwinkle).